The primary structure comprises 212 residues: Probable transaldolase (212 aa).

Lysine 84 serves as the catalytic Schiff-base intermediate with substrate.

It belongs to the transaldolase family. Type 3B subfamily.

The protein localises to the cytoplasm. The catalysed reaction is D-sedoheptulose 7-phosphate + D-glyceraldehyde 3-phosphate = D-erythrose 4-phosphate + beta-D-fructose 6-phosphate. It functions in the pathway carbohydrate degradation; pentose phosphate pathway; D-glyceraldehyde 3-phosphate and beta-D-fructose 6-phosphate from D-ribose 5-phosphate and D-xylulose 5-phosphate (non-oxidative stage): step 2/3. Its function is as follows. Transaldolase is important for the balance of metabolites in the pentose-phosphate pathway. This is Probable transaldolase from Bacillus pumilus (strain SAFR-032).